The primary structure comprises 20 residues: 2-oxo-acid reductase (20 aa).

Belongs to the AOR/FOR family. In terms of assembly, forms various types of homooligomers. Requires [4Fe-4S] cluster as cofactor. Mo-molybdopterin serves as cofactor.

It is found in the cell membrane. It carries out the reaction a (2R)-2-hydroxycarboxylate + A = a 2-oxocarboxylate + AH2. Its activity is regulated as follows. Is inhibited by cyanide. Is sensitive to oxygen. Oxidoreductase with an extremely broad substrate specificity that can reduce reversibly 2-oxocarboxylates to (2R)-hydroxycarboxylates. This is 2-oxo-acid reductase from Proteus hauseri.